A 162-amino-acid polypeptide reads, in one-letter code: Phosphopantetheine adenylyltransferase (162 aa).

T10 contributes to the substrate binding site. ATP is bound by residues 10–11 and H18; that span reads TF. 3 residues coordinate substrate: K42, L74, and R88. ATP-binding positions include 89–91, E99, and 124–130; these read GLR and YAFLSSS.

It belongs to the bacterial CoaD family. In terms of assembly, homohexamer. The cofactor is Mg(2+).

It localises to the cytoplasm. The enzyme catalyses (R)-4'-phosphopantetheine + ATP + H(+) = 3'-dephospho-CoA + diphosphate. Its pathway is cofactor biosynthesis; coenzyme A biosynthesis; CoA from (R)-pantothenate: step 4/5. In terms of biological role, reversibly transfers an adenylyl group from ATP to 4'-phosphopantetheine, yielding dephospho-CoA (dPCoA) and pyrophosphate. The sequence is that of Phosphopantetheine adenylyltransferase from Methylococcus capsulatus (strain ATCC 33009 / NCIMB 11132 / Bath).